A 1165-amino-acid chain; its full sequence is ATP-dependent helicase/deoxyribonuclease subunit B (1165 aa).

The region spanning 1-324 (MRFIIGGAGS…LVEAQNRREE (324 aa)) is the UvrD-like helicase ATP-binding domain. 6-13 (GGAGSGKS) contributes to the ATP binding site. The UvrD-like helicase C-terminal domain occupies 282-597 (PLRFRGAPEL…IVGTVERSRH (316 aa)). The [4Fe-4S] cluster site is built by cysteine 803, cysteine 1121, cysteine 1124, and cysteine 1130.

Belongs to the helicase family. AddB/RexB type 1 subfamily. Heterodimer of AddA and AddB. Mg(2+) is required as a cofactor. It depends on [4Fe-4S] cluster as a cofactor.

In terms of biological role, the heterodimer acts as both an ATP-dependent DNA helicase and an ATP-dependent, dual-direction single-stranded exonuclease. Recognizes the chi site generating a DNA molecule suitable for the initiation of homologous recombination. The AddB subunit has 5' -&gt; 3' nuclease activity but not helicase activity. This Symbiobacterium thermophilum (strain DSM 24528 / JCM 14929 / IAM 14863 / T) protein is ATP-dependent helicase/deoxyribonuclease subunit B.